The sequence spans 403 residues: Tyrosine--tRNA ligase (403 aa).

The 'HIGH' region motif lies at 42–51 (PTAPDLHLGH). A 'KMSKS' region motif is present at residues 226–230 (KMSKS). Lys229 is an ATP binding site. Residues 336 to 396 (MPISAVLNKA…GKKAFGRITL (61 aa)) enclose the S4 RNA-binding domain.

The protein belongs to the class-I aminoacyl-tRNA synthetase family. TyrS type 2 subfamily. In terms of assembly, homodimer.

Its subcellular location is the cytoplasm. It catalyses the reaction tRNA(Tyr) + L-tyrosine + ATP = L-tyrosyl-tRNA(Tyr) + AMP + diphosphate + H(+). Its function is as follows. Catalyzes the attachment of tyrosine to tRNA(Tyr) in a two-step reaction: tyrosine is first activated by ATP to form Tyr-AMP and then transferred to the acceptor end of tRNA(Tyr). This Pseudomonas syringae pv. tomato (strain ATCC BAA-871 / DC3000) protein is Tyrosine--tRNA ligase.